A 916-amino-acid chain; its full sequence is Translation initiation factor IF-2 (916 aa).

The tract at residues 58–317 is disordered; it reads LEAEGHLPGA…GVTVPRGDGG (260 aa). Residues 120-142 show a composition bias toward low complexity; it reads EKVAASEAADAKPAAGAPADTAK. Residues 195-206 are compositionally biased toward pro residues; it reads SNIPRPAPPRPG. Composition is skewed to gly residues over residues 214-227 and 235-282; these read RPGG…GGRP and SAGG…GRGG. Positions 283 to 294 are enriched in basic residues; it reads GKSKARKSKRAK. Residues 409–583 enclose the tr-type G domain; sequence IRPPVVTVMG…LTADAGLDLR (175 aa). A G1 region spans residues 418–425; the sequence is GHVDHGKT. A GTP-binding site is contributed by 418–425; it reads GHVDHGKT. Positions 443–447 are G2; sequence GITQH. Residues 468 to 471 are G3; sequence DTPG. Residues 468–472 and 522–525 contribute to the GTP site; these read DTPGH and NKVD. The G4 stretch occupies residues 522-525; the sequence is NKVD. The segment at 558-560 is G5; the sequence is SAR.

Belongs to the TRAFAC class translation factor GTPase superfamily. Classic translation factor GTPase family. IF-2 subfamily.

It localises to the cytoplasm. One of the essential components for the initiation of protein synthesis. Protects formylmethionyl-tRNA from spontaneous hydrolysis and promotes its binding to the 30S ribosomal subunits. Also involved in the hydrolysis of GTP during the formation of the 70S ribosomal complex. The sequence is that of Translation initiation factor IF-2 from Leifsonia xyli subsp. xyli (strain CTCB07).